Here is a 705-residue protein sequence, read N- to C-terminus: Choline transporter-like protein 2 (705 aa).

Residues 1-33 are Cytoplasmic-facing; it reads MGKDSQHYYGKHGTPQKYDPTFKGPIYNRGCTD. T14 is modified (phosphothreonine). The chain crosses the membrane as a helical span at residues 34–54; it reads IICCVLLFLAIVGYVAVGIIA. Residues 55 to 232 are Extracellular-facing; it reads WTHGDPRKVI…QIFEDYTVSW (178 aa). Residues N187 and N200 are each glycosylated (N-linked (GlcNAc...) asparagine). A helical transmembrane segment spans residues 233-253; the sequence is YWIVIGLVIAMLLSLMFIVLL. Topologically, residues 254–256 are cytoplasmic; the sequence is RFL. The helical transmembrane segment at 257-277 threads the bilayer; the sequence is AGVMVWVMIVMVILVLGYGIF. Over 278 to 315 the chain is Extracellular; it reads HCYAEYSRLRGEAGSDVSLVDLGFQTDLRVYLHLRQTW. Residues 316–336 form a helical membrane-spanning segment; that stretch reads MAFMIILSILEVVIILLLIFL. The Cytoplasmic portion of the chain corresponds to 337-364; sequence RKRILIAIALIKEASRAVGHVMCSMLYP. A helical transmembrane segment spans residues 365 to 385; it reads LVTFFLLCLCIAYWASTSVFL. The Extracellular segment spans residues 386–453; the sequence is STSNVAVYKI…LQIFNAFMFF (68 aa). N416 is a glycosylation site (N-linked (GlcNAc...) asparagine). The chain crosses the membrane as a helical span at residues 454–476; that stretch reads WLANFVLALGQVTLAGAFASYYW. Residues 477–503 are Cytoplasmic-facing; that stretch reads AMRKPDDMPAFPLFSAFGRALRYHTGS. The chain crosses the membrane as a helical span at residues 504 to 524; that stretch reads LAFGSLILAIVQIIRVMLEYL. The Extracellular segment spans residues 525 to 562; that stretch reads DQRLKAAQNKFAKFLMVCLKCCFWCLEKFIKFLNRNAY. Residues 563-583 traverse the membrane as a helical segment; it reads IMIAIYGTNFCTSARNAFFLL. At 584-598 the chain is on the cytoplasmic side; sequence MRNIIRVAVLDKVTD. A helical membrane pass occupies residues 599 to 619; sequence FLFLLGKLLIVGSVGILAFFF. At 620–637 the chain is on the extracellular side; the sequence is FTHRIRIVQDTAPPLNYY. A helical transmembrane segment spans residues 638–658; that stretch reads WVPILTVIIGSYLIAHGFFSV. Residues 659 to 705 lie on the Cytoplasmic side of the membrane; that stretch reads YGMCVDTLFLCFLEDLERNDGSAERPYFMSSTLKKLLNKTNKKVAES.

It belongs to the CTL (choline transporter-like) family. As to quaternary structure, interacts with COCH. In terms of processing, N-glycosylated.

Its subcellular location is the cell membrane. The protein localises to the mitochondrion outer membrane. The catalysed reaction is choline(out) + n H(+)(in) = choline(in) + n H(+)(out). It catalyses the reaction ethanolamine(out) + n H(+)(in) = ethanolamine(in) + n H(+)(out). In terms of biological role, exhibits choline transporter activity, as choline/H+ antiporter. Also acts as a low-affinity ethanolamine/H+ antiporter, regulating the supply of extracellular ethanolamine (Etn) for the CDP-Etn pathway, redistribute intracellular Etn and balance the CDP-Cho and CDP-Etn arms of the Kennedy pathway. This is Choline transporter-like protein 2 (Slc44a2) from Rattus norvegicus (Rat).